The following is a 410-amino-acid chain: ORC1-type DNA replication protein 4 (410 aa).

Residues threonine 73–leucine 77, tyrosine 220, and arginine 232 each bind ATP.

The protein belongs to the CDC6/cdc18 family.

In terms of biological role, involved in regulation of DNA replication. The polypeptide is ORC1-type DNA replication protein 4 (orc4) (Halobacterium salinarum (strain ATCC 700922 / JCM 11081 / NRC-1) (Halobacterium halobium)).